We begin with the raw amino-acid sequence, 1732 residues long: Polycystin-1-like protein 3 (1732 aa).

A signal peptide spans 1–23 (MFFKGGSWLWLYIRTSIILGSEL). Residues 24–697 (NSPAPHGQNN…IKLFLRVTNN (674 aa)) lie on the Extracellular side of the membrane. One can recognise a C-type lectin domain in the interval 30–138 (GQNNCYQLNR…CLLKYYFICQ (109 aa)). 2 disulfide bridges follow: cysteine 51–cysteine 137 and cysteine 112–cysteine 129. N-linked (GlcNAc...) asparagine glycosylation is found at asparagine 286, asparagine 363, asparagine 515, asparagine 537, and asparagine 575. Residues 523-685 (TSLNMSTHQL…FVVPRTVNVE (163 aa)) enclose the GAIN-B domain. Intrachain disulfides connect cysteine 635–cysteine 663 and cysteine 650–cysteine 665. Positions 635 to 685 (CYYWEIHNQTWSSAGCQVGPQSTILRTQCLCNHLTFFASDFFVVPRTVNVE) are GPS. A helical membrane pass occupies residues 698–718 (PVGVSLLASLLGFYVITVVWA). Residues 719–905 (RKKDQADMQK…PWNQFTRVQR (187 aa)) are Cytoplasmic-facing. The region spanning 743 to 860 (FHYLIQVYTG…GDCELDRVFI (118 aa)) is the PLAT domain. The helical transmembrane segment at 906 to 926 (LSCCMTLLLCNMVINVMFWKI) threads the bilayer. Over 927 to 939 (NSTTAKRDEQMRP) the chain is Extracellular. Residues 940 to 960 (FAVAWSELLVSIHTAVILFPI) traverse the membrane as a helical segment. Over 961-1154 (NLVIGRLFPL…ISNGLSKWLT (194 aa)) the chain is Cytoplasmic. Residues 1155 to 1175 (SVCWLLLGFTSLASAFFTALY) form a helical membrane-spanning segment. Residues 1176-1198 (SLELSKDQATSWMISIILSVLQN) lie on the Extracellular side of the membrane. The chain crosses the membrane as a helical span at residues 1199 to 1219 (IFISQPVKVVFFTFLYSLMMS). The Cytoplasmic portion of the chain corresponds to 1220-1289 (RMPRLNKENE…KLTGDILVQI (70 aa)). A helical transmembrane segment spans residues 1290–1300 (LFLTLLMTAIY). The Extracellular portion of the chain corresponds to 1301–1461 (SAKNSNRFYL…SFTSLQMSKK (161 aa)). A helical transmembrane segment spans residues 1462-1491 (GCVWSIISQVIYYLLVCYYAFIQGCQLKQQ). Topologically, residues 1492 to 1500 (KWRFFTGKR) are cytoplasmic. Residues 1501-1519 (NILDTSIILISFILLGLDM) form a helical membrane-spanning segment. The Extracellular portion of the chain corresponds to 1520 to 1550 (KSISLHKKNMARYRDDQDRFISFYEAVKVNS). The chain crosses the membrane as a helical span at residues 1551–1572 (AATHLVGFPVLLATVQLWNLLR). Topologically, residues 1573–1589 (HSPRLRVISRTLSRAWD) are cytoplasmic. The helical transmembrane segment at 1590–1614 (EVVGFLLIILILLTGYAIAFNLLFG) threads the bilayer. Residues 1613–1651 (FGCSISDYRTFFSSAVTVVGLLMGISHQEEVFALDPVLG) form a channel pore-region region. Over 1615–1647 (CSISDYRTFFSSAVTVVGLLMGISHQEEVFALD) the chain is Extracellular. Residues 1648–1667 (PVLGTFLILTSVILMVLVVI) traverse the membrane as a helical segment. Over 1668–1732 (NLFVSAILMA…SDTEVLDELP (65 aa)) the chain is Cytoplasmic.

It belongs to the polycystin family. In terms of assembly, heterotetramer with PKD2L1, composed of 3 subunit of PKD2L1 and 1 subunit of PKD1L3. Autoproteolytically processed at the GPS region of the GAIN-B domain; this cleavage modulates receptor activity. As to expression, highly expressed in placenta, weakly in heart and lung.

It localises to the cell membrane. The catalysed reaction is Ca(2+)(in) = Ca(2+)(out). It carries out the reaction Na(+)(in) = Na(+)(out). The enzyme catalyses K(+)(in) = K(+)(out). It catalyses the reaction Mg(2+)(in) = Mg(2+)(out). With respect to regulation, the non-selective cation channel is gated following an off-response property by acid: gated open after the removal of acid stimulus, but not during acid application. Regulation of non-selective cation channel activity by external Ca(2+) is bimodal, first sensitizing and subsequently inactivating the current. In terms of biological role, pore-forming subunit of a heterotetrameric, non-selective cation channel that is permeable to Ca(2+). Also shows permeability towards NA(1+), K(+) and Mg(2+). Heterotetrameric complex channel is activated by external low pH and Ca(2+), but opens only when the extracellular pH rises again and after the removal of acid stimulus. May act as a sour taste receptor in gustatory cells; however, its contribution to sour taste perception is unclear in vivo and may be indirect. This chain is Polycystin-1-like protein 3, found in Homo sapiens (Human).